A 1409-amino-acid polypeptide reads, in one-letter code: Tensin-2 (1409 aa).

The tract at residues 1–35 is disordered; the sequence is MKSSGPVERLLRALGRRDSSRAASRPRKAEPHSFR. Positions 9–20 are enriched in basic and acidic residues; that stretch reads RLLRALGRRDSS. The Phorbol-ester/DAG-type zinc-finger motif lies at 31–79; that stretch reads PHSFREKVFRKKPPVCAVCKVTIDGTGVSCRVCKVATHRKCEAKVTSAC. At threonine 91 the chain carries Phosphothreonine. Phosphoserine is present on residues serine 118 and serine 120. The 173-residue stretch at 122–294 folds into the Phosphatase tensin-type domain; sequence DPLMERRWDL…SYFSGLLSGS (173 aa). Cysteine 231 acts as the Phosphocysteine intermediate in catalysis. The C2 tensin-type domain maps to 299–425; the sequence is SSPLFLHYVL…ASVEFVFSSS (127 aa). Serine 455 is modified (phosphoserine). Residue tyrosine 456 is modified to Phosphotyrosine. Residues 462 to 536 are disordered; that stretch reads HHEDSVDGSL…SPGRPPPTAA (75 aa). Serine 466 is modified (phosphoserine). A Phosphothreonine modification is found at threonine 474. Position 481 is a phosphoserine (serine 481). Tyrosine 483 is subject to Phosphotyrosine. Residues 491–506 are compositionally biased toward pro residues; it reads RQTPPAPSPEPPPPPM. At arginine 555 the chain carries Omega-N-methylarginine. Disordered regions lie at residues 562 to 582, 812 to 1098, and 1111 to 1130; these read AILDDEEQPTVGGGPHLGVYP, PGEG…SSPA, and LSDNVPQTPEPPTQESQSNV. A phosphoserine mark is found at serine 820, serine 825, serine 830, serine 832, serine 835, and serine 845. 2 stretches are compositionally biased toward polar residues: residues 900–918 and 930–940; these read SASSELSGPSTPLHTSSPV and RSPTSAPTQRL. The residue at position 910 (threonine 910) is a Phosphothreonine. 3 positions are modified to phosphoserine: serine 931, serine 941, and serine 972. The span at 968-982 shows a compositional bias: pro residues; that stretch reads PLAPSPVSPTFPPSS. Threonine 977 carries the phosphothreonine modification. Phosphoserine occurs at positions 991 and 1003. Over residues 1046-1056 the composition is skewed to pro residues; the sequence is PEPPQSSPTPA. Residues 1140 to 1247 enclose the SH2 domain; sequence WYKPHLSRDQ…SLPCCLRIPS (108 aa). Threonine 1182 bears the Phosphothreonine mark. Serine 1247 is modified (phosphoserine). Positions 1275–1408 constitute a PTB domain; that stretch reads ACSVLYLTSV…FITKVLLGQR (134 aa).

The protein belongs to the PTEN phosphatase protein family. Interacts with AXL. Interacts with SYK; leading to its phosphorylation. Interacts with SQSTM1 (via PB1 domain); the interaction leads to sequestration of TNS2 in cytoplasmic aggregates with SQSTM1 and promotes TNS2 ubiquitination and proteasomal degradation. Ubiquitinated following sequestration in cytoplasmic aggregates with SQSTM1, leading to proteasomal degradation. In terms of tissue distribution, detected in heart, kidney, brain, thymus, spleen, liver, placenta, lung, skeletal muscle and small intestine.

It is found in the cell junction. It localises to the focal adhesion. The protein localises to the cell membrane. The protein resides in the cytoplasm. The catalysed reaction is O-phospho-L-tyrosyl-[protein] + H2O = L-tyrosyl-[protein] + phosphate. Its function is as follows. Tyrosine-protein phosphatase which regulates cell motility, proliferation and muscle-response to insulin. Phosphatase activity is mediated by binding to phosphatidylinositol-3,4,5-triphosphate (PtdIns(3,4,5)P3) via the SH2 domain. In muscles and under catabolic conditions, dephosphorylates IRS1 leading to its degradation and muscle atrophy. Negatively regulates PI3K-AKT pathway activation. Dephosphorylates nephrin NPHS1 in podocytes which regulates activity of the mTORC1 complex. Under normal glucose conditions, NPHS1 outcompetes IRS1 for binding to phosphatidylinositol 3-kinase (PI3K) which balances mTORC1 activity but high glucose conditions lead to up-regulation of TNS2, increased NPHS1 dephosphorylation and activation of mTORC1, contributing to podocyte hypertrophy and proteinuria. Required for correct podocyte morphology, podocyte-glomerular basement membrane interaction and integrity of the glomerular filtration barrier. Enhances RHOA activation in the presence of DLC1. Plays a role in promoting DLC1-dependent remodeling of the extracellular matrix. This is Tensin-2 (TNS2) from Homo sapiens (Human).